A 384-amino-acid polypeptide reads, in one-letter code: Succinyl-diaminopimelate desuccinylase (384 aa).

H71 serves as a coordination point for Zn(2+). D73 is a catalytic residue. D104 serves as a coordination point for Zn(2+). Residue E138 is the Proton acceptor of the active site. E139, E167, and H357 together coordinate Zn(2+).

This sequence belongs to the peptidase M20A family. DapE subfamily. As to quaternary structure, homodimer. Zn(2+) is required as a cofactor. Requires Co(2+) as cofactor.

The enzyme catalyses N-succinyl-(2S,6S)-2,6-diaminopimelate + H2O = (2S,6S)-2,6-diaminopimelate + succinate. It functions in the pathway amino-acid biosynthesis; L-lysine biosynthesis via DAP pathway; LL-2,6-diaminopimelate from (S)-tetrahydrodipicolinate (succinylase route): step 3/3. In terms of biological role, catalyzes the hydrolysis of N-succinyl-L,L-diaminopimelic acid (SDAP), forming succinate and LL-2,6-diaminopimelate (DAP), an intermediate involved in the bacterial biosynthesis of lysine and meso-diaminopimelic acid, an essential component of bacterial cell walls. This is Succinyl-diaminopimelate desuccinylase from Blochmanniella floridana.